A 531-amino-acid polypeptide reads, in one-letter code: High affinity cysteine transporter (531 aa).

Residues 1–54 (MSKVDVKIGADSISSSDEILVPSRLADVTLAFMEENDAAVPEITPEQEKKLKRK) lie on the Cytoplasmic side of the membrane. The chain crosses the membrane as a helical span at residues 55–75 (LFLTIFTFVSAINLLLYMDKA). The Lumenal portion of the chain corresponds to 76-97 (TLSYDSILGFFEDTGLTQNTYN). A helical membrane pass occupies residues 98 to 118 (TVNTLFYVGFAIGQFPGQYLA). The Cytoplasmic portion of the chain corresponds to 119-120 (QK). A helical transmembrane segment spans residues 121–141 (LPLGKFLGGLLATWTILIFLS). Over 142-154 (CTAYNFSGVVALR) the chain is Lumenal. N-linked (GlcNAc...) asparagine glycosylation is present at asparagine 146. The helical transmembrane segment at 155 to 175 (FFLGLTESVVIPILITTMGMF) threads the bilayer. Residues 176 to 186 (FDASERAAAQP) are Cytoplasmic-facing. The helical transmembrane segment at 187 to 207 (FFFAACMGSPIPTGFIAYGVL) threads the bilayer. The Lumenal segment spans residues 208–218 (HITNPSISLWK). Residues 219–239 (IFTIIIGGLTFIMTVVVILWF) traverse the membrane as a helical segment. Residues 240 to 285 (PNNPADVKFFSIQERVWIIRRVQASTGSSIEQKVFKKSQFREAMKD) lie on the Cytoplasmic side of the membrane. Residues 286-306 (YITWLFGLFFLLQQLANNLPY) traverse the membrane as a helical segment. Residues 307–324 (QQNLLFEGMGGVDALGST) lie on the Lumenal side of the membrane. A helical transmembrane segment spans residues 325–345 (LVSVAGAGFAVVCAFIATLML). At 346–352 (AKWKNIS) the chain is on the cytoplasmic side. The helical transmembrane segment at 353–373 (ALTAIFWTLPALVGSIAAAAL) threads the bilayer. The Lumenal portion of the chain corresponds to 374–378 (PWDNK). The helical transmembrane segment at 379–399 (IGILANICMAGQIFGIPFIIA) threads the bilayer. Residues 400-413 (LSWASSSASGYTKK) lie on the Cytoplasmic side of the membrane. A helical membrane pass occupies residues 414 to 436 (LTRSSVSLFAMGIANIISPQIWR). The Lumenal segment spans residues 437-447 (EKDSPRFLPAW). Residues 448-468 (IVQIVLSFSLAPAILLLIHFI) form a helical membrane-spanning segment. The stretch at 469–498 (LKRRNNQRLKNYDENLQNYLDRIQLIESEN) forms a coiled coil. The Cytoplasmic segment spans residues 469 to 531 (LKRRNNQRLK…LENETFIYPL (63 aa)). Phosphoserine occurs at positions 500 and 501.

Belongs to the major facilitator superfamily. Allantoate permease family.

The protein localises to the cell membrane. It localises to the endoplasmic reticulum membrane. Its function is as follows. High affinity cysteine-specific transporter. Major contributor to cysteine transport when cysteine, at low concentrations, is provided as the sole sulfur source. This Saccharomyces cerevisiae (strain ATCC 204508 / S288c) (Baker's yeast) protein is High affinity cysteine transporter (YCT1).